Consider the following 160-residue polypeptide: Endoribonuclease YbeY (160 aa).

Zn(2+)-binding residues include His-121, His-125, and His-131.

It belongs to the endoribonuclease YbeY family. The cofactor is Zn(2+).

Its subcellular location is the cytoplasm. Single strand-specific metallo-endoribonuclease involved in late-stage 70S ribosome quality control and in maturation of the 3' terminus of the 16S rRNA. This Syntrophus aciditrophicus (strain SB) protein is Endoribonuclease YbeY.